Consider the following 250-residue polypeptide: MMPRMGPPAAARQDNPLHVSFRNPQWPPNFINKDNVLDYFCNQANAFYEMNSCNQQIRMQNIVNRTVEECLRTMPGIQYVLWYSQPPLFIICKQRRNNVTNVSPIAYYYVINGSVHQAPDMYSLVQSRLLGALEPLRNAFGEVTNYSRYNTAKGYYWEFKNKPNVKKREEEKKEDEEEKLEDRSTNFQKTRTMMLLNQLFSEMPAEDALEREEKEEVEEEEEETLKTEEPTTSTDEPKFAEPTARTTSKQ.

The segment at 166–250 (KKREEEKKED…EPTARTTSKQ (85 aa)) is disordered. Positions 204–223 (PAEDALEREEKEEVEEEEEE) are enriched in acidic residues. Positions 224–239 (TLKTEEPTTSTDEPKF) are enriched in basic and acidic residues.

It belongs to the Mediator complex subunit 6 family. In terms of assembly, component of the Mediator complex. Interacts with let-19/mdt-13. Interacts with RNA polymerase II. Interacts with mdt-28.

The protein localises to the nucleus. Component of the Mediator complex, a coactivator involved in the regulated transcription of nearly all RNA polymerase II-dependent genes. Mediator functions as a bridge to convey information from gene-specific regulatory proteins to the basal RNA polymerase II transcription machinery. Mediator is recruited to promoters by direct interactions with regulatory proteins and serves as a scaffold for the assembly of a functional preinitiation complex with RNA polymerase II and the general transcription factors. Acts to repress beta-catenin target genes. Required for asymmetric division of T-cells and for gonad and germ cell development. The chain is Mediator of RNA polymerase II transcription subunit 6 (mdt-6) from Caenorhabditis elegans.